Consider the following 88-residue polypeptide: Kunitz-type U15-theraphotoxin-Hs1a (88 aa).

Residues 1 to 27 (MGTARFLSAVLLLSVLLMVTFPALLSA) form the signal peptide. Positions 28 to 33 (EYHDGR) are excised as a propeptide. The region spanning 37-85 (CSLPSDSGDCLRFFEMWYFDGTTCTKFVYGGYGGNDNRFPTEKACMKRC) is the BPTI/Kunitz inhibitor domain. 2 disulfides stabilise this stretch: Cys37-Cys85 and Cys60-Cys81.

Belongs to the venom Kunitz-type family. 03 (sub-Kunitz) subfamily. Expressed by the venom gland.

The protein resides in the secreted. Serine protease inhibitor that inhibits trypsin at a molar ratio of 1:1. In Cyriopagopus schmidti (Chinese bird spider), this protein is Kunitz-type U15-theraphotoxin-Hs1a.